Consider the following 245-residue polypeptide: 1-(5-phosphoribosyl)-5-[(5-phosphoribosylamino)methylideneamino] imidazole-4-carboxamide isomerase (245 aa).

Asp-7 (proton acceptor) is an active-site residue. Asp-129 functions as the Proton donor in the catalytic mechanism.

Belongs to the HisA/HisF family.

The protein resides in the cytoplasm. The catalysed reaction is 1-(5-phospho-beta-D-ribosyl)-5-[(5-phospho-beta-D-ribosylamino)methylideneamino]imidazole-4-carboxamide = 5-[(5-phospho-1-deoxy-D-ribulos-1-ylimino)methylamino]-1-(5-phospho-beta-D-ribosyl)imidazole-4-carboxamide. Its pathway is amino-acid biosynthesis; L-histidine biosynthesis; L-histidine from 5-phospho-alpha-D-ribose 1-diphosphate: step 4/9. In Shewanella oneidensis (strain ATCC 700550 / JCM 31522 / CIP 106686 / LMG 19005 / NCIMB 14063 / MR-1), this protein is 1-(5-phosphoribosyl)-5-[(5-phosphoribosylamino)methylideneamino] imidazole-4-carboxamide isomerase.